A 177-amino-acid polypeptide reads, in one-letter code: ATP synthase subunit delta (177 aa).

It belongs to the ATPase delta chain family. F-type ATPases have 2 components, F(1) - the catalytic core - and F(0) - the membrane proton channel. F(1) has five subunits: alpha(3), beta(3), gamma(1), delta(1), epsilon(1). F(0) has three main subunits: a(1), b(2) and c(10-14). The alpha and beta chains form an alternating ring which encloses part of the gamma chain. F(1) is attached to F(0) by a central stalk formed by the gamma and epsilon chains, while a peripheral stalk is formed by the delta and b chains.

Its subcellular location is the cell inner membrane. In terms of biological role, f(1)F(0) ATP synthase produces ATP from ADP in the presence of a proton or sodium gradient. F-type ATPases consist of two structural domains, F(1) containing the extramembraneous catalytic core and F(0) containing the membrane proton channel, linked together by a central stalk and a peripheral stalk. During catalysis, ATP synthesis in the catalytic domain of F(1) is coupled via a rotary mechanism of the central stalk subunits to proton translocation. Its function is as follows. This protein is part of the stalk that links CF(0) to CF(1). It either transmits conformational changes from CF(0) to CF(1) or is implicated in proton conduction. The polypeptide is ATP synthase subunit delta (Janthinobacterium sp. (strain Marseille) (Minibacterium massiliensis)).